The primary structure comprises 247 residues: UPF0246 protein CD630_18230 (247 aa).

It belongs to the UPF0246 family.

The sequence is that of UPF0246 protein CD630_18230 from Clostridioides difficile (strain 630) (Peptoclostridium difficile).